We begin with the raw amino-acid sequence, 623 residues long: Transketolase (623 aa).

Methionine 1 carries the N-acetylmethionine modification. N6-acetyllysine occurs at positions 6 and 11. Histidine 37 lines the substrate pocket. The thiamine diphosphate site is built by serine 40 and histidine 77. Serine 104 is modified (phosphoserine). 123–125 (GSL) provides a ligand contact to thiamine diphosphate. An N6-acetyllysine modification is found at lysine 144. Aspartate 155 contributes to the Mg(2+) binding site. Thiamine diphosphate contacts are provided by glycine 156 and asparagine 185. Positions 185 and 187 each coordinate Mg(2+). 3 positions are modified to N6-acetyllysine: lysine 204, lysine 232, and lysine 241. Residues lysine 244 and histidine 258 each contribute to the thiamine diphosphate site. Position 258 (histidine 258) interacts with substrate. The residue at position 260 (lysine 260) is an N6-acetyllysine. Tyrosine 275 is subject to Phosphotyrosine. Residue threonine 287 is modified to Phosphothreonine. Phosphoserine is present on serine 295. Arginine 318 and serine 345 together coordinate substrate. Serine 345 carries the post-translational modification Phosphoserine. A Glycyl lysine isopeptide (Lys-Gly) (interchain with G-Cter in SUMO2) cross-link involves residue lysine 352. Glutamate 366 (proton donor) is an active-site residue. Residue phenylalanine 392 participates in thiamine diphosphate binding. Substrate is bound by residues histidine 416 and aspartate 424. Glutamine 428 contacts thiamine diphosphate. Residue arginine 474 participates in substrate binding. An N6-acetyllysine mark is found at lysine 538 and lysine 603.

The protein belongs to the transketolase family. In terms of assembly, homodimer. Requires Mg(2+) as cofactor. The cofactor is Ca(2+). It depends on Mn(2+) as a cofactor. Co(2+) serves as cofactor. Thiamine diphosphate is required as a cofactor.

It carries out the reaction D-sedoheptulose 7-phosphate + D-glyceraldehyde 3-phosphate = aldehydo-D-ribose 5-phosphate + D-xylulose 5-phosphate. Catalyzes the transfer of a two-carbon ketol group from a ketose donor to an aldose acceptor, via a covalent intermediate with the cofactor thiamine pyrophosphate. This Rattus norvegicus (Rat) protein is Transketolase (Tkt).